The primary structure comprises 303 residues: MLSPAKTPAGIRAEPLVSLENVGVLRNGRWLVRGVDFSVSRGEIVTLIGPNGSGKSTSAKAAIGVLKPDEGRVERKAGLKVGYVPQKLSIDWTLPLSVRRLMTLTGPLPERDMLSALESAGIAHMLDAEVQHLSGGEFQRALMARAIARKPDLLVLDEPVQGVDFSGEIVLYDLIKSIRNATGCGILLISHDLHVVMAETDTVICLNGHVCCRGTPESVSRSPEYVRLFGSRAAQTLAVYSHHHDHTHLPDGRVQHADGTVTDHCHPDDGHHAHEHGHAGHEHDHDHPDHAHPHAHEAGERHA.

One can recognise an ABC transporter domain in the interval 17–232; the sequence is VSLENVGVLR…PEYVRLFGSR (216 aa). Residue 49–56 participates in ATP binding; that stretch reads GPNGSGKS. Residues 263–303 are disordered; it reads DHCHPDDGHHAHEHGHAGHEHDHDHPDHAHPHAHEAGERHA.

This sequence belongs to the ABC transporter superfamily. Zinc importer (TC 3.A.1.15.5) family. The complex is composed of two ATP-binding proteins (ZnuC), two transmembrane proteins (ZnuB) and a solute-binding protein (ZnuA).

The protein resides in the cell inner membrane. The enzyme catalyses Zn(2+)(out) + ATP(in) + H2O(in) = Zn(2+)(in) + ADP(in) + phosphate(in) + H(+)(in). In terms of biological role, part of the ABC transporter complex ZnuABC involved in zinc import. Responsible for energy coupling to the transport system. This chain is Zinc import ATP-binding protein ZnuC, found in Rhizobium johnstonii (strain DSM 114642 / LMG 32736 / 3841) (Rhizobium leguminosarum bv. viciae).